We begin with the raw amino-acid sequence, 368 residues long: 1-deoxy-D-xylulose 5-phosphate reductoisomerase (368 aa).

The NADPH site is built by Thr-9, Gly-10, Ser-11, Ile-12, Asn-35, and Asn-106. Position 107 (Lys-107) interacts with 1-deoxy-D-xylulose 5-phosphate. Glu-108 is a binding site for NADPH. Asp-132 serves as a coordination point for Mn(2+). 1-deoxy-D-xylulose 5-phosphate is bound by residues Ser-133, Glu-134, Ser-158, and His-181. Glu-134 is a binding site for Mn(2+). Residue Gly-187 coordinates NADPH. Residues Ser-194, Asn-199, Lys-200, and Glu-203 each contribute to the 1-deoxy-D-xylulose 5-phosphate site. Glu-203 is a binding site for Mn(2+).

It belongs to the DXR family. Mg(2+) is required as a cofactor. It depends on Mn(2+) as a cofactor.

It carries out the reaction 2-C-methyl-D-erythritol 4-phosphate + NADP(+) = 1-deoxy-D-xylulose 5-phosphate + NADPH + H(+). It functions in the pathway isoprenoid biosynthesis; isopentenyl diphosphate biosynthesis via DXP pathway; isopentenyl diphosphate from 1-deoxy-D-xylulose 5-phosphate: step 1/6. Its function is as follows. Catalyzes the NADPH-dependent rearrangement and reduction of 1-deoxy-D-xylulose-5-phosphate (DXP) to 2-C-methyl-D-erythritol 4-phosphate (MEP). This Mycoplasmoides gallisepticum (strain R(low / passage 15 / clone 2)) (Mycoplasma gallisepticum) protein is 1-deoxy-D-xylulose 5-phosphate reductoisomerase.